A 120-amino-acid polypeptide reads, in one-letter code: Small ribosomal subunit protein bS6 (120 aa).

The interval 93–120 (KKADTAPSSMMKTVEREEARKASQTEQA) is disordered. A compositionally biased stretch (basic and acidic residues) spans 105-120 (TVEREEARKASQTEQA).

It belongs to the bacterial ribosomal protein bS6 family.

Its function is as follows. Binds together with bS18 to 16S ribosomal RNA. The chain is Small ribosomal subunit protein bS6 from Delftia acidovorans (strain DSM 14801 / SPH-1).